The following is a 308-amino-acid chain: Elongation factor Ts (308 aa).

An involved in Mg(2+) ion dislocation from EF-Tu region spans residues 80–83; sequence TDFV.

Belongs to the EF-Ts family.

The protein localises to the cytoplasm. Associates with the EF-Tu.GDP complex and induces the exchange of GDP to GTP. It remains bound to the aminoacyl-tRNA.EF-Tu.GTP complex up to the GTP hydrolysis stage on the ribosome. In Rhizobium rhizogenes (strain K84 / ATCC BAA-868) (Agrobacterium radiobacter), this protein is Elongation factor Ts.